Consider the following 408-residue polypeptide: Putative agmatinase 3 (408 aa).

The N-terminal stretch at 1–21 (MKSVEWFTWGVFLLLSGFGEA) is a signal peptide. Positions 198, 222, 224, 226, 319, and 321 each coordinate Mn(2+).

Belongs to the arginase family. Mn(2+) serves as cofactor.

It catalyses the reaction agmatine + H2O = urea + putrescine. This chain is Putative agmatinase 3, found in Schizosaccharomyces pombe (strain 972 / ATCC 24843) (Fission yeast).